A 288-amino-acid chain; its full sequence is Shikimate dehydrogenase (NADP(+)) (288 aa).

Residues 21–23 (SLS) and Thr68 contribute to the shikimate site. Catalysis depends on Lys72, which acts as the Proton acceptor. Glu84 is an NADP(+) binding site. Residues Asn93 and Asp108 each coordinate shikimate. NADP(+) contacts are provided by residues 132 to 136 (GNGGA) and Leu230. Tyr232 contributes to the shikimate binding site. Gly253 contacts NADP(+).

It belongs to the shikimate dehydrogenase family. Homodimer.

The catalysed reaction is shikimate + NADP(+) = 3-dehydroshikimate + NADPH + H(+). It participates in metabolic intermediate biosynthesis; chorismate biosynthesis; chorismate from D-erythrose 4-phosphate and phosphoenolpyruvate: step 4/7. Its function is as follows. Involved in the biosynthesis of the chorismate, which leads to the biosynthesis of aromatic amino acids. Catalyzes the reversible NADPH linked reduction of 3-dehydroshikimate (DHSA) to yield shikimate (SA). The polypeptide is Shikimate dehydrogenase (NADP(+)) (Gloeothece citriformis (strain PCC 7424) (Cyanothece sp. (strain PCC 7424))).